The sequence spans 142 residues: MGQGKFAARNLVRTAKKFRWSDSVYSRRALKLKLKADPLEGAPIGRAIVLEKVGVEAKQPNSAIRKCVRVQLIKNGRQVTAFAVGDGAINFIDEHDEVTICGIGGRAGRSMGDIPGVRFVVSGVNGVSLNELVIGRAEKARR.

This sequence belongs to the universal ribosomal protein uS12 family. Part of the 30S ribosomal subunit.

Functionally, with S4 and S5 plays an important role in translational accuracy. Located at the interface of the 30S and 50S subunits. The polypeptide is Small ribosomal subunit protein uS12 (Methanocorpusculum labreanum (strain ATCC 43576 / DSM 4855 / Z)).